Reading from the N-terminus, the 145-residue chain is 6-pyruvoyl tetrahydrobiopterin synthase (145 aa).

Position 19 is a phosphoserine (Ser-19). His-24 lines the Zn(2+) pocket. Phosphoserine is present on Ser-28. Cys-43 (proton acceptor) is an active-site residue. Residues His-49 and His-51 each coordinate Zn(2+). The active-site Charge relay system is His-90. Position 128 is a phosphotyrosine (Tyr-128). The active-site Charge relay system is Glu-134.

This sequence belongs to the PTPS family. In terms of assembly, homohexamer formed of two homotrimers in a head to head fashion. It depends on Zn(2+) as a cofactor. In terms of processing, phosphorylation of Ser-19 is required for maximal enzyme activity.

It catalyses the reaction 7,8-dihydroneopterin 3'-triphosphate = 6-pyruvoyl-5,6,7,8-tetrahydropterin + triphosphate + H(+). Its pathway is cofactor biosynthesis; tetrahydrobiopterin biosynthesis; tetrahydrobiopterin from 7,8-dihydroneopterin triphosphate: step 1/3. Involved in the biosynthesis of tetrahydrobiopterin, an essential cofactor of aromatic amino acid hydroxylases. Catalyzes the transformation of 7,8-dihydroneopterin triphosphate into 6-pyruvoyl tetrahydropterin. The polypeptide is 6-pyruvoyl tetrahydrobiopterin synthase (PTS) (Pongo abelii (Sumatran orangutan)).